The sequence spans 515 residues: N-acetylglucosamine-1-phosphodiester alpha-N-acetylglucosaminidase (515 aa).

An N-terminal signal peptide occupies residues 1–25 (MATSTGRWLLLRLALFGFLWEASGG). Residues 26-49 (LDSGASRDDDLLLPYPRARARLPR) constitute a propeptide, removed in mature form. The Lumenal portion of the chain corresponds to 50 to 448 (DCTRVRAGNR…AGELSFFTRT (399 aa)). 5 disulfides stabilise this stretch: C115–C148, C132–C323, C307–C314, C362–C373, and C380–C389. N208, N214, and N296 each carry an N-linked (GlcNAc...) asparagine glycan. An EGF-like domain is found at 358 to 390 (DELDCGPSNCSQHGLCTETGCRCDAGWTGSNCS). Residues N366, N388, and N420 are each glycosylated (N-linked (GlcNAc...) asparagine). The helical transmembrane segment at 449-469 (AWLALTLALAFLLLISTAANL) threads the bilayer. At 470–515 (SLLLSRAERNRRLHGDYAYHPLQEMNGEPLAAEKEQPGGAHNPFKD) the chain is on the cytoplasmic side. The mediates the interaction with AP4M1 stretch occupies residues 486–493 (YAYHPLQE). A Tyrosine-based internalization motif motif is present at residues 488–491 (YHPL). An NPF internalization motif motif is present at residues 511-515 (NPFKD).

Homotetramer arranged as two disulfide-linked homodimers. Interacts with AP4M1. In terms of processing, the precursor is cleaved and activated in the trans-Golgi network by a furin endopeptidase. Isoform 2 may be brain-specific.

The protein resides in the golgi apparatus. It is found in the golgi stack membrane. Its subcellular location is the trans-Golgi network. It carries out the reaction N(4)-[6-(N-acetyl-alpha-D-glucosaminyl-1-phospho)-alpha-D-mannosyl-(1-&gt;2)-alpha-D-mannosyl-(glycan)]-L-asparaginyl-[protein] + H2O = N(4)-[6-phospho-alpha-D-mannosyl-(1-&gt;2)-alpha-D-mannosyl-(glycan)]-L-asparaginyl-[protein] + N-acetyl-D-glucosamine + H(+). The protein operates within protein modification; protein glycosylation. Catalyzes the second step in the formation of the mannose 6-phosphate targeting signal on lysosomal enzyme oligosaccharides by removing GlcNAc residues from GlcNAc-alpha-P-mannose moieties, which are formed in the first step. Also hydrolyzes UDP-GlcNAc, a sugar donor for Golgi N-acetylglucosaminyltransferases. The chain is N-acetylglucosamine-1-phosphodiester alpha-N-acetylglucosaminidase (NAGPA) from Homo sapiens (Human).